Consider the following 142-residue polypeptide: uncharacterized protein (142 aa).

This is an uncharacterized protein from Invertebrate iridescent virus 3 (IIV-3).